A 401-amino-acid chain; its full sequence is MSDPIITFDHVVKEFKTRGRGANIARAVDDVSLTIDRGDIFGIIGYSGAGKSTLVRLINALERPTSGTVTVLGTDITSLSETKLRPIRQKIGMIFQQFNLFSTKTVAQNIAYPLQLDHWRKDYQDRRVNELLEFVGLSEHANKYPSQLSGGQKQRVGIARALATNPEILLADEATSALDPETTTEVLALLKRVNEEFGITIVLITHQMNVVQQIAGRVAVMSAGRVVESGDVYDVFAAPQQPVTKRFIATALSGLPEEDRVERLHHEWSGRIVTVLIRQKDVSGTQGHELKASGQNISELIAKYGVESSLLYGGIDTVKGTAIGAITYEFNGPGWHVDEFLRELAANSDVIDFGTAAKPVAYADAVAGHASYAEDRAHDPLAADTATAPAASAAAHEGANA.

The 243-residue stretch at 6–248 (ITFDHVVKEF…PQQPVTKRFI (243 aa)) folds into the ABC transporter domain. 45-52 (GYSGAGKS) lines the ATP pocket.

The protein belongs to the ABC transporter superfamily. Methionine importer (TC 3.A.1.24) family. As to quaternary structure, the complex is composed of two ATP-binding proteins (MetN), two transmembrane proteins (MetI) and a solute-binding protein (MetQ).

It is found in the cell membrane. It carries out the reaction L-methionine(out) + ATP + H2O = L-methionine(in) + ADP + phosphate + H(+). The catalysed reaction is D-methionine(out) + ATP + H2O = D-methionine(in) + ADP + phosphate + H(+). Part of the ABC transporter complex MetNIQ involved in methionine import. Responsible for energy coupling to the transport system. In Bifidobacterium longum (strain NCC 2705), this protein is Methionine import ATP-binding protein MetN.